A 282-amino-acid polypeptide reads, in one-letter code: Fused uL13/uS9 ribosomal subunit protein (282 aa).

Positions 1 to 141 are large ribosomal subunit protein uL13; sequence MLLMIINGEG…LGEISELLGA (141 aa). The interval 150 to 282 is small ribosomal subunit protein uS9; that stretch reads MKKVIHTSGK…ARARRQKSYR (133 aa). Positions 259–282 are disordered; the sequence is DPRRSEPKKYGGRGARARRQKSYR. The segment covering 273-282 has biased composition (basic residues); it reads ARARRQKSYR.

This sequence in the N-terminal section; belongs to the universal ribosomal protein uL13 family. In the C-terminal section; belongs to the universal ribosomal protein uS9 family. L13 is part of the 50S ribosomal subunit. S9 is part of the 30S ribosomal subunit.

L13 protein is one of the early assembly proteins of the 50S ribosomal subunit, although it is not seen to bind rRNA by itself. It is important during the early stages of 50S assembly. This Methanothermobacter thermautotrophicus (strain ATCC 29096 / DSM 1053 / JCM 10044 / NBRC 100330 / Delta H) (Methanobacterium thermoautotrophicum) protein is Fused uL13/uS9 ribosomal subunit protein (rpl13/rps9).